The primary structure comprises 1216 residues: Coatomer subunit alpha-1 (1216 aa).

8 WD repeats span residues 7–48 (TKSN…DRFD), 49–88 (EHEG…CLFT), 91–132 (GHLD…SVLT), 133–172 (GHNH…KKTV), 202–241 (GHDR…AWEV), 246–285 (GHMN…GLQT), 288–326 (REHD…PAFA), and 363–404 (SLNQ…VGRS).

Oligomeric complex that consists of at least the alpha, beta, beta', gamma, delta, epsilon and zeta subunits.

The protein localises to the cytoplasm. It localises to the golgi apparatus membrane. The protein resides in the cytoplasmic vesicle. It is found in the COPI-coated vesicle membrane. Functionally, the coatomer is a cytosolic protein complex that binds to dilysine motifs and reversibly associates with Golgi non-clathrin-coated vesicles, which further mediate biosynthetic protein transport from the ER, via the Golgi up to the trans Golgi network. Coatomer complex is required for budding from Golgi membranes, and is essential for the retrograde Golgi-to-ER transport of dilysine-tagged proteins. This Arabidopsis thaliana (Mouse-ear cress) protein is Coatomer subunit alpha-1.